Here is an 89-residue protein sequence, read N- to C-terminus: Small ribosomal subunit protein uS15 (89 aa).

Residues 1–18 (MSLDTAEKQKLIENHQVH) show a composition bias toward basic and acidic residues. Residues 1–23 (MSLDTAEKQKLIENHQVHPTDTG) are disordered.

This sequence belongs to the universal ribosomal protein uS15 family. As to quaternary structure, part of the 30S ribosomal subunit. Forms a bridge to the 50S subunit in the 70S ribosome, contacting the 23S rRNA.

Functionally, one of the primary rRNA binding proteins, it binds directly to 16S rRNA where it helps nucleate assembly of the platform of the 30S subunit by binding and bridging several RNA helices of the 16S rRNA. Forms an intersubunit bridge (bridge B4) with the 23S rRNA of the 50S subunit in the ribosome. This chain is Small ribosomal subunit protein uS15, found in Prochlorococcus marinus (strain MIT 9301).